The sequence spans 207 residues: Ribosome maturation factor RimM (207 aa).

The 78-residue stretch at 130 to 207 folds into the PRC barrel domain; sequence EDEFYWVDLI…RIVVDWGLDY (78 aa).

Belongs to the RimM family. In terms of assembly, binds ribosomal protein uS19.

It is found in the cytoplasm. Functionally, an accessory protein needed during the final step in the assembly of 30S ribosomal subunit, possibly for assembly of the head region. Essential for efficient processing of 16S rRNA. May be needed both before and after RbfA during the maturation of 16S rRNA. It has affinity for free ribosomal 30S subunits but not for 70S ribosomes. In Cupriavidus taiwanensis (strain DSM 17343 / BCRC 17206 / CCUG 44338 / CIP 107171 / LMG 19424 / R1) (Ralstonia taiwanensis (strain LMG 19424)), this protein is Ribosome maturation factor RimM.